Here is a 106-residue protein sequence, read N- to C-terminus: MAKSYGAIFLLTLIVLFMLQTMVMASSGSNVKWSQKRYGPGSLKRTQCPSECDRRCKKTQYHKACITFCNKCCRKCLCVPPGYYGNKQVCSCYNNWKTQEGGPKCP.

The signal sequence occupies residues 1 to 25; the sequence is MAKSYGAIFLLTLIVLFMLQTMVMA.

Belongs to the GASA family. Post-translationally, six disulfide bonds may be present. Expressed in flower buds, style, stamen filaments, vasculature of petals, root phloem, vasculature of cotyledons and rosette leaves and developing embryo.

It localises to the secreted. Gibberellin-regulated protein involved in the regulation of floral meristem and floral organ identity, and promotion of seed size and weight. May play a role in the promotion of gibberellin responses such as regulation of flowering under short-day conditions, seed germination and inhibition of gibberellin oxidase. Possesses redox activity in E.coli and may function in redox regulation in planta. This chain is Gibberellin-regulated protein 4 (GASA4), found in Arabidopsis thaliana (Mouse-ear cress).